The sequence spans 322 residues: Formimidoylglutamase (322 aa).

Positions 127, 163, 165, 167, 254, and 256 each coordinate Mn(2+).

It belongs to the arginase family. Mn(2+) is required as a cofactor.

The catalysed reaction is N-formimidoyl-L-glutamate + H2O = formamide + L-glutamate. It functions in the pathway amino-acid degradation; L-histidine degradation into L-glutamate; L-glutamate from N-formimidoyl-L-glutamate (hydrolase route): step 1/1. In terms of biological role, catalyzes the conversion of N-formimidoyl-L-glutamate to L-glutamate and formamide. This is Formimidoylglutamase from Paraburkholderia xenovorans (strain LB400).